The primary structure comprises 426 residues: Serine--tRNA ligase (426 aa).

The disordered stretch occupies residues 103–129 (VPNLPDDSVPTGKDENDNPEIRRWGTP). The segment covering 114 to 125 (GKDENDNPEIRR) has biased composition (basic and acidic residues). 230–232 (TAE) contributes to the L-serine binding site. Position 261–263 (261–263 (RSE)) interacts with ATP. Glu284 is a binding site for L-serine. 348–351 (EISS) lines the ATP pocket. Ser384 contributes to the L-serine binding site.

Belongs to the class-II aminoacyl-tRNA synthetase family. Type-1 seryl-tRNA synthetase subfamily. In terms of assembly, homodimer. The tRNA molecule binds across the dimer.

It localises to the cytoplasm. The enzyme catalyses tRNA(Ser) + L-serine + ATP = L-seryl-tRNA(Ser) + AMP + diphosphate + H(+). The catalysed reaction is tRNA(Sec) + L-serine + ATP = L-seryl-tRNA(Sec) + AMP + diphosphate + H(+). It functions in the pathway aminoacyl-tRNA biosynthesis; selenocysteinyl-tRNA(Sec) biosynthesis; L-seryl-tRNA(Sec) from L-serine and tRNA(Sec): step 1/1. Its function is as follows. Catalyzes the attachment of serine to tRNA(Ser). Is also able to aminoacylate tRNA(Sec) with serine, to form the misacylated tRNA L-seryl-tRNA(Sec), which will be further converted into selenocysteinyl-tRNA(Sec). The protein is Serine--tRNA ligase of Dichelobacter nodosus (strain VCS1703A).